Reading from the N-terminus, the 146-residue chain is uncharacterized protein (146 aa).

The N-terminal stretch at 1–24 (MVIYYGKKNCTLLLLLFILCNIYS) is a signal peptide. Asn99 and Asn106 each carry an N-linked (GlcNAc...) asparagine glycan.

This is an uncharacterized protein from Saccharomyces cerevisiae (strain ATCC 204508 / S288c) (Baker's yeast).